The sequence spans 153 residues: RNA-binding protein 3 (153 aa).

In terms of domain architecture, RRM spans 6 to 84 (GKLFVGGLNF…RQIRVDHAGK (79 aa)). Omega-N-methylarginine is present on R47. Residues 81 to 153 (HAGKSARGSR…GGNYRDNYDN (73 aa)) form a disordered region. The span at 89-112 (SRGGAFGGRGRSYSRGGGDQGYGS) shows a compositional bias: gly residues. At R103 the chain carries Asymmetric dimethylarginine; alternate. A Dimethylated arginine; alternate modification is found at R103. R103 is subject to Omega-N-methylarginine; alternate. R118 and R128 each carry omega-N-methylarginine. Phosphoserine occurs at positions 133 and 143. Y151 carries the phosphotyrosine modification.

Interacts with RPL4. Associates with the 60S ribosomal subunits in an RNA-independent manner. Arg-103 is dimethylated, probably to asymmetric dimethylarginine. Post-translationally, phosphorylated.

It is found in the nucleus. Its subcellular location is the cytoplasm. It localises to the cell projection. The protein localises to the dendrite. In terms of biological role, cold-inducible mRNA binding protein that enhances global protein synthesis at both physiological and mild hypothermic temperatures. Reduces the relative abundance of microRNAs, when overexpressed. Enhances phosphorylation of translation initiation factors and active polysome formation. In Mus musculus (Mouse), this protein is RNA-binding protein 3 (Rbm3).